Consider the following 291-residue polypeptide: Nucleotide-binding protein lmo2474 (291 aa).

Residue 13–20 (GMSGAGKT) coordinates ATP. 63–66 (DLRG) is a binding site for GTP.

Belongs to the RapZ-like family.

In terms of biological role, displays ATPase and GTPase activities. The polypeptide is Nucleotide-binding protein lmo2474 (Listeria monocytogenes serovar 1/2a (strain ATCC BAA-679 / EGD-e)).